A 544-amino-acid chain; its full sequence is Chaperonin GroEL (544 aa).

ATP contacts are provided by residues T30–P33, K51, D87–T91, G415, N479–A481, and D495.

It belongs to the chaperonin (HSP60) family. Forms a cylinder of 14 subunits composed of two heptameric rings stacked back-to-back. Interacts with the co-chaperonin GroES.

The protein localises to the cytoplasm. It carries out the reaction ATP + H2O + a folded polypeptide = ADP + phosphate + an unfolded polypeptide.. Functionally, together with its co-chaperonin GroES, plays an essential role in assisting protein folding. The GroEL-GroES system forms a nano-cage that allows encapsulation of the non-native substrate proteins and provides a physical environment optimized to promote and accelerate protein folding. The sequence is that of Chaperonin GroEL from Acinetobacter baumannii (strain AB307-0294).